The sequence spans 229 residues: Uracil-DNA glycosylase (229 aa).

The Proton acceptor role is filled by D64.

It belongs to the uracil-DNA glycosylase (UDG) superfamily. UNG family. In terms of assembly, monomer.

It localises to the cytoplasm. The enzyme catalyses Hydrolyzes single-stranded DNA or mismatched double-stranded DNA and polynucleotides, releasing free uracil.. Functionally, excises uracil residues from the DNA which can arise as a result of misincorporation of dUMP residues by DNA polymerase or due to deamination of cytosine. This chain is Uracil-DNA glycosylase, found in Escherichia coli O157:H7.